A 558-amino-acid polypeptide reads, in one-letter code: Solute carrier family 22 member 6-A (558 aa).

Topologically, residues M1–R15 are cytoplasmic. The helical transmembrane segment at F16–L36 threads the bilayer. The Extracellular portion of the chain corresponds to L37–Q140. The chain crosses the membrane as a helical span at residues L141–S161. Residues D162–R167 lie on the Cytoplasmic side of the membrane. The helical transmembrane segment at A168 to P188 threads the bilayer. Topologically, residues N189–R197 are extracellular. Residues F198–W218 form a helical membrane-spanning segment. Residues V219–T225 are Cytoplasmic-facing. Residues I226–A246 form a helical membrane-spanning segment. At Y247–R253 the chain is on the extracellular side. Residues W254 to P274 traverse the membrane as a helical segment. Topologically, residues E275–R342 are cytoplasmic. The chain crosses the membrane as a helical span at residues I343–M363. Topologically, residues D364–N369 are extracellular. Residues V370–S390 form a helical membrane-spanning segment. The Cytoplasmic portion of the chain corresponds to T391–K400. The helical transmembrane segment at F401 to P421 threads the bilayer. Topologically, residues H422 to R428 are extracellular. The chain crosses the membrane as a helical span at residues T429 to Y449. Residues T450–G462 lie on the Cytoplasmic side of the membrane. A helical transmembrane segment spans residues L463 to L483. Residues G484 to P488 are Extracellular-facing. Residues F489–L509 form a helical membrane-spanning segment. At P510–L558 the chain is on the cytoplasmic side. The segment covering E539 to K550 has biased composition (basic and acidic residues). Residues E539–L558 form a disordered region.

This sequence belongs to the major facilitator (TC 2.A.1) superfamily. Organic cation transporter (TC 2.A.1.19) family. In terms of processing, glycosylated. Glycosylation is necessary for proper targeting of the transporter to the plasma membrane.

It is found in the cell membrane. It localises to the basolateral cell membrane. The protein resides in the basal cell membrane. Its function is as follows. Involved in the renal elimination of endogenous and exogenous organic anions. Mediates the sodium-independent uptake of p-aminohippurate (PAH), 2,3-dimercapto-1-propanesulfonic acid (DMPS), cidofovir, adefovir, 9-(2-phosphonylmethoxyethyl) guanine (PMEG), 9-(2-phosphonylmethoxyethyl) diaminopurine (PMEDAP), ochratoxin (OTA), acyclovir (ACV), 3'-azido-3-'deoxythymidine (AZT), cimetidine (CMD), 2,4-dichloro-phenoxyacetate (2,4-D), hippurate (HA), indoleacetate (IA), indoxyl sulfate (IS) and 3-carboxy-4-methyl-5-propyl-2-furanpropionate (CMPF) and edaravone sulfate. PAH uptake is inhibited by p-chloromercuribenzenesulphonate (PCMBS), diethyl pyrocarbonate (DEPC), indomethacin, sulindac, diclofenac, carprofen, okadaic acid, benzothiazolylcysteine (BTC), S-chlorotrifluoroethylcysteine (CTFC), cysteine S-conjugates S-dichlorovinylcysteine (DCVC), furosemide, steviol, phorbol 12-myristate 13-acetate (PMA), calcium ionophore A23187, benzylpenicillin, bumetamide, losartan, probenecid, phenol red, urate, glutarate and alpha-ketoglutarate. The sequence is that of Solute carrier family 22 member 6-A (slc22a6-a) from Xenopus laevis (African clawed frog).